Consider the following 173-residue polypeptide: Helix-loop-helix protein lin-22 (173 aa).

The basic motif stretch occupies residues 21–34; it reads KKIKNKPLMEKKRR. The region spanning 21-78 is the bHLH domain; it reads KKIKNKPLMEKKRRARINKSLSQLKQILIQDEHKNSIQHSKWEKADILEMAVEYLQQL. A helix-loop-helix motif region spans residues 35–78; that stretch reads ARINKSLSQLKQILIQDEHKNSIQHSKWEKADILEMAVEYLQQL. Positions 83–95 are enriched in low complexity; it reads PCSLSPSTSSIST. Residues 83–102 are disordered; sequence PCSLSPSTSSISTPPTPKEE.

As to expression, expressed mostly in the seam (stem) cells and hypodermis (hyp7), but also to a lesser extent in the intestine.

The protein resides in the nucleus. Functionally, probable transcription factor. During development, required for cell fate specification, probably by promoting or repressing expression of genes involved in specific cell fate. Involved in specifying lineages derived from the epidermal stem cells of the lateral ectoderm, known as seam cells. Modulates symmetric divisions of seam cells, perhaps in concert with the Wnt signaling pathway. May repress expression of homeobox genes mab-5, egl-5 and lin-39. The polypeptide is Helix-loop-helix protein lin-22 (Caenorhabditis elegans).